The following is a 129-amino-acid chain: Phosphoribosyl-AMP cyclohydrolase (129 aa).

Mg(2+) is bound at residue Asp-77. Cys-78 lines the Zn(2+) pocket. Mg(2+)-binding residues include Asp-79 and Asp-81. The Zn(2+) site is built by Cys-94 and Cys-101.

It belongs to the PRA-CH family. Homodimer. Mg(2+) serves as cofactor. It depends on Zn(2+) as a cofactor.

The protein localises to the cytoplasm. The catalysed reaction is 1-(5-phospho-beta-D-ribosyl)-5'-AMP + H2O = 1-(5-phospho-beta-D-ribosyl)-5-[(5-phospho-beta-D-ribosylamino)methylideneamino]imidazole-4-carboxamide. It participates in amino-acid biosynthesis; L-histidine biosynthesis; L-histidine from 5-phospho-alpha-D-ribose 1-diphosphate: step 3/9. In terms of biological role, catalyzes the hydrolysis of the adenine ring of phosphoribosyl-AMP. This is Phosphoribosyl-AMP cyclohydrolase from Pelotomaculum thermopropionicum (strain DSM 13744 / JCM 10971 / SI).